We begin with the raw amino-acid sequence, 324 residues long: DGAT1/2-independent enzyme synthesizing storage lipids (324 aa).

At 1–50 (MIDKNQTCGVGQDSVPYMICLIHILEEWFGVEQLEDYLNFANYLLWVFTP) the chain is on the lumenal side. An N-linked (GlcNAc...) asparagine glycan is attached at N5. A helical membrane pass occupies residues 51–71 (LILLILPYFTIFLLYLTIIFL). Topologically, residues 72-125 (HIYKRKNVLKEAYSHNLWDGARKTVATLWDGHAAVWHGYEVHGMEKIPEDGPAL) are cytoplasmic. Residues 126 to 146 (IIFYHGAIPIDFYYFMAKIFI) traverse the membrane as a helical segment. H130 is an active-site residue. At 147-324 (HKGRTCRVVA…IMSALLERFH (178 aa)) the chain is on the lumenal side.

This sequence belongs to the diacylglycerol acyltransferase family. Highly divergent.

The protein localises to the endoplasmic reticulum membrane. It carries out the reaction a 1,2-diacylglycerol + a 1,2-diacyl-sn-glycero-3-phosphocholine = a triacylglycerol + a 1-acyl-sn-glycero-3-phosphocholine. The enzyme catalyses a 1-O-alkyl-2-acyl-sn-glycero-3-phosphocholine + a 1,2-diacylglycerol = a 1-O-alkyl-sn-glycero-3-phosphocholine + a triacylglycerol. The catalysed reaction is a 2-acylglycerol + an acyl-CoA = a 1,2-diacylglycerol + CoA. It catalyses the reaction an acyl-CoA + a 1,2-diacyl-sn-glycerol = a triacyl-sn-glycerol + CoA. It carries out the reaction 2-(9Z-octadecenoyl)-glycerol + (9Z)-octadecenoyl-CoA = 1,2-di-(9Z-octadecenoyl)-glycerol + CoA. The enzyme catalyses 1,2-di-(9Z-octadecenoyl)-sn-glycerol + (9Z)-octadecenoyl-CoA = 1,2,3-tri-(9Z-octadecenoyl)-glycerol + CoA. Acyltransferase activity is specifically inhibited by TMX1 at the endoplasmic reticulum, restricting accumulation of triacylglycerol. In terms of biological role, catalytic subunit of the alternative triglyceride biosynthesis pathway, which mediates formation of triacylglycerol from diacylglycerol and membrane phospholipids. Synthesizes triacylglycerol at the expense of membrane phospholipids, such as phosphatidylcholine (PC) and its ether-linked form (ePC), thereby altering the composition of membranes. The alternative triglyceride biosynthesis pathway is probably required to provide the energy required for rapid growth when fuel sources are limiting. It maintains mitochondrial function during periods of extracellular lipid starvation. Can also use acyl-CoA as donor: acts as a acyl-CoA:monoacylglycerol acyltransferase (MGAT), but also shows acyl-CoA:diacylglycerol acyltransferase (DGAT) activity. This Homo sapiens (Human) protein is DGAT1/2-independent enzyme synthesizing storage lipids.